A 359-amino-acid polypeptide reads, in one-letter code: UPF0283 membrane protein Atu1356 (359 aa).

Positions 1–39 (MKAPTQNDPQTRRPAAFTLETEEAARPSATQKRAPRSFD) are disordered. Helical transmembrane passes span 75–95 (FGKL…GLWA) and 108–128 (WLGY…LALV).

The protein belongs to the UPF0283 family.

It localises to the cell inner membrane. This chain is UPF0283 membrane protein Atu1356, found in Agrobacterium fabrum (strain C58 / ATCC 33970) (Agrobacterium tumefaciens (strain C58)).